An 879-amino-acid chain; its full sequence is Phosphoenolpyruvate carboxylase (879 aa).

Catalysis depends on residues His-137 and Lys-545.

It belongs to the PEPCase type 1 family. Requires Mg(2+) as cofactor.

The catalysed reaction is oxaloacetate + phosphate = phosphoenolpyruvate + hydrogencarbonate. In terms of biological role, forms oxaloacetate, a four-carbon dicarboxylic acid source for the tricarboxylic acid cycle. The polypeptide is Phosphoenolpyruvate carboxylase (Yersinia enterocolitica serotype O:8 / biotype 1B (strain NCTC 13174 / 8081)).